The chain runs to 201 residues: Potassium-transporting ATPase KdpC subunit (201 aa).

Residues Pro-7–Val-27 traverse the membrane as a helical segment.

Belongs to the KdpC family. In terms of assembly, the system is composed of three essential subunits: KdpA, KdpB and KdpC.

The protein resides in the cell inner membrane. In terms of biological role, part of the high-affinity ATP-driven potassium transport (or Kdp) system, which catalyzes the hydrolysis of ATP coupled with the electrogenic transport of potassium into the cytoplasm. This subunit acts as a catalytic chaperone that increases the ATP-binding affinity of the ATP-hydrolyzing subunit KdpB by the formation of a transient KdpB/KdpC/ATP ternary complex. In Methylorubrum extorquens (strain CM4 / NCIMB 13688) (Methylobacterium extorquens), this protein is Potassium-transporting ATPase KdpC subunit.